We begin with the raw amino-acid sequence, 248 residues long: Pulmonary surfactant-associated protein A (248 aa).

The N-terminal stretch at 1-20 (MLLCSLTLTLLWMVASGLEC) is a signal peptide. A Collagen-like domain is found at 28–100 (GSPGIPGTPG…PGERGPPGFP (73 aa)). The disordered stretch occupies residues 29–102 (SPGIPGTPGS…ERGPPGFPAY (74 aa)). 9 positions are modified to 4-hydroxyproline: Pro30, Pro33, Pro36, Pro42, Pro54, Pro57, Pro63, Pro67, and Pro70. A compositionally biased stretch (basic and acidic residues) spans 42–51 (PGRDGRDGIK). The segment covering 54–65 (PGPPGPMGPPGG) has biased composition (pro residues). Positions 69–82 (LPGRDGMTGAPGLP) are enriched in low complexity. The segment covering 84–93 (ERGEKGEPGE) has biased composition (basic and acidic residues). The C-type lectin domain maps to 132–248 (LAVGEKVFST…LQYRLAICEF (117 aa)). 2 disulfides stabilise this stretch: Cys155–Cys246 and Cys224–Cys238. Asn207 is a glycosylation site (N-linked (GlcNAc...) asparagine). Residues Glu215, Arg217, Asn234, and Asp235 each coordinate Ca(2+).

This sequence belongs to the SFTPA family. As to quaternary structure, oligomeric complex of 6 set of homotrimers.

It is found in the secreted. Its subcellular location is the extracellular space. It localises to the extracellular matrix. The protein resides in the surface film. Its function is as follows. In presence of calcium ions, it binds to surfactant phospholipids and contributes to lower the surface tension at the air-liquid interface in the alveoli of the mammalian lung and is essential for normal respiration. Enhances the expression of MYO18A/SP-R210 on alveolar macrophages. This chain is Pulmonary surfactant-associated protein A (SFTPA1), found in Bos taurus (Bovine).